Reading from the N-terminus, the 431-residue chain is Enolase (431 aa).

Gln-167 contacts (2R)-2-phosphoglycerate. Glu-209 serves as the catalytic Proton donor. Asp-246, Glu-289, and Asp-316 together coordinate Mg(2+). The (2R)-2-phosphoglycerate site is built by Lys-341, Arg-370, Ser-371, and Lys-392. Lys-341 functions as the Proton acceptor in the catalytic mechanism.

The protein belongs to the enolase family. In terms of assembly, component of the RNA degradosome, a multiprotein complex involved in RNA processing and mRNA degradation. Mg(2+) is required as a cofactor.

The protein localises to the cytoplasm. The protein resides in the secreted. It localises to the cell surface. It carries out the reaction (2R)-2-phosphoglycerate = phosphoenolpyruvate + H2O. It functions in the pathway carbohydrate degradation; glycolysis; pyruvate from D-glyceraldehyde 3-phosphate: step 4/5. Its function is as follows. Catalyzes the reversible conversion of 2-phosphoglycerate (2-PG) into phosphoenolpyruvate (PEP). It is essential for the degradation of carbohydrates via glycolysis. The chain is Enolase from Hahella chejuensis (strain KCTC 2396).